The chain runs to 43 residues: uncharacterized protein (43 aa).

2 stretches are compositionally biased toward polar residues: residues 1-19 and 33-43; these read MSQK…SGAS and PENSISKTFSK. Residues 1–43 form a disordered region; the sequence is MSQKLSFFQQNTRNGSGASRTLVIKPPTIQPKPENSISKTFSK.

This is an uncharacterized protein from Dictyostelium discoideum (Social amoeba).